Reading from the N-terminus, the 82-residue chain is Small ribosomal subunit protein bS18 (82 aa).

It belongs to the bacterial ribosomal protein bS18 family. In terms of assembly, part of the 30S ribosomal subunit. Forms a tight heterodimer with protein bS6.

Its function is as follows. Binds as a heterodimer with protein bS6 to the central domain of the 16S rRNA, where it helps stabilize the platform of the 30S subunit. This is Small ribosomal subunit protein bS18 from Bifidobacterium longum (strain NCC 2705).